The chain runs to 171 residues: NADH-quinone oxidoreductase subunit I 1 (171 aa).

2 4Fe-4S ferredoxin-type domains span residues 41–71 and 81–110; these read LSRD…LQAT and EFFR…LTPD. 8 residues coordinate [4Fe-4S] cluster: cysteine 51, cysteine 54, cysteine 57, cysteine 61, cysteine 90, cysteine 93, cysteine 96, and cysteine 100.

Belongs to the complex I 23 kDa subunit family. In terms of assembly, NDH-1 is composed of 14 different subunits. Subunits NuoA, H, J, K, L, M, N constitute the membrane sector of the complex. It depends on [4Fe-4S] cluster as a cofactor.

Its subcellular location is the cell inner membrane. It carries out the reaction a quinone + NADH + 5 H(+)(in) = a quinol + NAD(+) + 4 H(+)(out). NDH-1 shuttles electrons from NADH, via FMN and iron-sulfur (Fe-S) centers, to quinones in the respiratory chain. The immediate electron acceptor for the enzyme in this species is believed to be ubiquinone. Couples the redox reaction to proton translocation (for every two electrons transferred, four hydrogen ions are translocated across the cytoplasmic membrane), and thus conserves the redox energy in a proton gradient. The protein is NADH-quinone oxidoreductase subunit I 1 of Nitrosospira multiformis (strain ATCC 25196 / NCIMB 11849 / C 71).